Reading from the N-terminus, the 205-residue chain is Glycerol-3-phosphate acyltransferase (205 aa).

Helical transmembrane passes span 4–24 (IAPG…AILV), 80–100 (PFWL…PVFF), 107–127 (GVAT…GVMA), 130–150 (WLLT…SALI), and 155–175 (VWWF…LILL).

This sequence belongs to the PlsY family. In terms of assembly, probably interacts with PlsX.

Its subcellular location is the cell inner membrane. It catalyses the reaction an acyl phosphate + sn-glycerol 3-phosphate = a 1-acyl-sn-glycero-3-phosphate + phosphate. It participates in lipid metabolism; phospholipid metabolism. Its function is as follows. Catalyzes the transfer of an acyl group from acyl-phosphate (acyl-PO(4)) to glycerol-3-phosphate (G3P) to form lysophosphatidic acid (LPA). This enzyme utilizes acyl-phosphate as fatty acyl donor, but not acyl-CoA or acyl-ACP. The protein is Glycerol-3-phosphate acyltransferase of Klebsiella pneumoniae subsp. pneumoniae (strain ATCC 700721 / MGH 78578).